A 485-amino-acid polypeptide reads, in one-letter code: D-alanine--D-alanyl carrier protein ligase (485 aa).

ATP is bound at residue threonine 144 to serine 145. Aspartate 189 lines the D-alanine pocket. Asparagine 284–threonine 289 is a binding site for ATP. Valine 293 contributes to the D-alanine binding site. ATP is bound by residues aspartate 365 and lysine 473. Position 473 (lysine 473) interacts with D-alanine.

Belongs to the ATP-dependent AMP-binding enzyme family. DltA subfamily.

It is found in the cytoplasm. It catalyses the reaction holo-[D-alanyl-carrier protein] + D-alanine + ATP = D-alanyl-[D-alanyl-carrier protein] + AMP + diphosphate. It functions in the pathway cell wall biogenesis; lipoteichoic acid biosynthesis. Functionally, catalyzes the first step in the D-alanylation of lipoteichoic acid (LTA), the activation of D-alanine and its transfer onto the D-alanyl carrier protein (Dcp) DltC. In an ATP-dependent two-step reaction, forms a high energy D-alanyl-AMP intermediate, followed by transfer of the D-alanyl residue as a thiol ester to the phosphopantheinyl prosthetic group of the Dcp. D-alanylation of LTA plays an important role in modulating the properties of the cell wall in Gram-positive bacteria, influencing the net charge of the cell wall. In Staphylococcus epidermidis (strain ATCC 35984 / DSM 28319 / BCRC 17069 / CCUG 31568 / BM 3577 / RP62A), this protein is D-alanine--D-alanyl carrier protein ligase.